The primary structure comprises 626 residues: Basic helix-loop-helix ARNT-like protein 1 (626 aa).

Residues 1–60 (MADQRMDISSTISDFMSPGPTDLLSSSLGTSGVDCNRKRKGSSTDYQESMDTDKDDPHGR) are disordered. Ser-17 carries the post-translational modification Phosphoserine; by GSK3-beta. Residues 17-32 (SPGPTDLLSSSLGTSG) are compositionally biased toward low complexity. Residue Thr-21 is modified to Phosphothreonine; by GSK3-beta. The short motif at 36-41 (NRKRKG) is the Nuclear localization signal element. Residues 51 to 60 (DTDKDDPHGR) are compositionally biased toward basic and acidic residues. Residues 72-125 (NAREAHSQIEKRRRDKMNSFIDELASLVPTCNAMSRKLDKLTVLRMAVQHMKTL) enclose the bHLH domain. A Phosphoserine modification is found at Ser-78. A Phosphoserine; by CK2 modification is found at Ser-90. The Nuclear export signal 1 signature appears at 142–152 (LSDDELKHLIL). Positions 143-215 (SDDELKHLIL…EQLSSSDTAP (73 aa)) constitute a PAS 1 domain. Residue Lys-252 forms a Glycyl lysine isopeptide (Lys-Gly) (interchain with G-Cter in SUMO2 and SUMO3) linkage. A Glycyl lysine isopeptide (Lys-Gly) (interchain with G-Cter in SUMO); alternate cross-link involves residue Lys-259. Residue Lys-259 forms a Glycyl lysine isopeptide (Lys-Gly) (interchain with G-Cter in SUMO2); alternate linkage. The region spanning 326–396 (PQPAGGDIKV…ECHRQVLQTR (71 aa)) is the PAS 2 domain. The Nuclear export signal 2 signature appears at 361 to 369 (LAYLPQELL). In terms of domain architecture, PAC spans 402–445 (NCYKFKIKDGSFITLRSRWFSFMNPWTKEVEYIVSTNTVVLANV). Disordered stretches follow at residues 458–493 (ASPH…AGAG) and 511–596 (GSSP…PSND). A compositionally biased stretch (gly residues) spans 484–493 (IPGGTRAGAG). The interaction with CIART stretch occupies residues 508 to 588 (RIRGSSPSSC…ISIDMIDNDQ (81 aa)). Over residues 511–521 (GSSPSSCGSSP) the composition is skewed to low complexity. Position 538 is an N6-acetyllysine (Lys-538).

In terms of assembly, component of the circadian clock oscillator which includes the CRY1/2 proteins, CLOCK or NPAS2, BMAL1 or BMAL2, CSNK1D and/or CSNK1E, TIMELESS and the PER1/2/3 proteins. Forms a heterodimer with CLOCK. The CLOCK-BMAL1 heterodimer is required for E-box-dependent transactivation, for CLOCK nuclear translocation and degradation, and, for phosphorylation of both CLOCK and BMAL1. Part of a nuclear complex which also includes RACK1 and PRKCA; RACK1 and PRKCA are recruited to the complex in a circadian manner. Interacts with NPAS2. Interacts with EZH2. Interacts with SUMO3. Interacts with SIRT1. Interacts with AHR. Interacts with ID1, ID2 and ID3. Interacts with DDX4. Interacts with OGT. Interacts with EED and SUZ12. Interacts with MTA1. Interacts with CIART. Interacts with HSP90. Interacts with KAT2B and EP300. Interacts with BHLHE40/DEC1 and BHLHE41/DEC2. Interacts with RELB and the interaction is enhanced in the presence of CLOCK. Interacts with PER1, PER2, CRY1 and CRY2 and this interaction requires a translocation to the nucleus. Interaction of the CLOCK-BMAL1 heterodimer with PER or CRY inhibits transcription activation. Interaction of the CLOCK-BMAL1 with CRY1 is independent of DNA but with PER2 is off DNA. The CLOCK-BMAL1 heterodimer interacts with GSK3B. Interacts with KDM5A. Interacts with KMT2A; in a circadian manner. Interacts with UBE3A. Interacts with PRKCG. Interacts with MAGEL2. Interacts with NCOA2. Interacts with THRAP3. The CLOCK-BMAL1 heterodimer interacts with PASD1. Interacts with PASD1. Interacts with USP9X. Interacts with PIWIL2 (via PIWI domain). Interacts with HDAC3. Interacts with HNF4A. Post-translationally, ubiquitinated, leading to its proteasomal degradation. Deubiquitinated by USP9X. O-glycosylated; contains O-GlcNAc. O-glycosylation by OGT prevents protein degradation by inhibiting ubiquitination. It also stabilizes the CLOCK-BMAL1 heterodimer thereby increasing CLOCK-BMAL1-mediated transcription of genes in the negative loop of the circadian clock such as PER1/2/3 and CRY1/2. In terms of processing, acetylated on Lys-538 by CLOCK during the repression phase of the circadian cycle. Acetylation facilitates recruitment of CRY1 protein and initiates the repression phase of the circadian cycle. Acetylated at Lys-538 by KAT5 during the activation phase of the cycle, leading to recruitment of the positive transcription elongation factor b (P-TEFb) and BRD4, followed by productive elongation of circadian transcripts. Deacetylated by SIRT1, which may result in decreased protein stability. Post-translationally, phosphorylated upon dimerization with CLOCK. Phosphorylation enhances the transcriptional activity, alters the subcellular localization and decreases the stability of the CLOCK-BMAL1 heterodimer by promoting its degradation. Phosphorylation shows circadian variations in the liver with a peak between CT10 to CT14. Phosphorylation at Ser-90 by CK2 is essential for its nuclear localization, its interaction with CLOCK and controls CLOCK nuclear entry. Dephosphorylation at Ser-78 is important for dimerization with CLOCK and transcriptional activity. Sumoylated on Lys-259 upon dimerization with CLOCK. Predominantly conjugated to poly-SUMO2/3 rather than SUMO1 and the level of these conjugates undergo rhythmic variation, peaking at CT9-CT12. Sumoylation localizes it exclusively to the PML body and promotes its ubiquitination in the PML body, ubiquitin-dependent proteasomal degradation and the transcriptional activity of the CLOCK-BMAL1 heterodimer. In terms of processing, undergoes lysosome-mediated degradation in a time-dependent manner in the liver. In terms of tissue distribution, highly expressed in the suprachiasmatic nucleus (SCN). Also expressed in all other tissues examined including kidney, intestine, liver, heart, spleen, brain, muscle, lung, harderian gland and eye. Low expression in kidney and spleen.

It is found in the nucleus. The protein resides in the cytoplasm. Its subcellular location is the PML body. Functionally, transcriptional activator which forms a core component of the circadian clock. The circadian clock, an internal time-keeping system, regulates various physiological processes through the generation of approximately 24 hour circadian rhythms in gene expression, which are translated into rhythms in metabolism and behavior. It is derived from the Latin roots 'circa' (about) and 'diem' (day) and acts as an important regulator of a wide array of physiological functions including metabolism, sleep, body temperature, blood pressure, endocrine, immune, cardiovascular, and renal function. Consists of two major components: the central clock, residing in the suprachiasmatic nucleus (SCN) of the brain, and the peripheral clocks that are present in nearly every tissue and organ system. Both the central and peripheral clocks can be reset by environmental cues, also known as Zeitgebers (German for 'timegivers'). The predominant Zeitgeber for the central clock is light, which is sensed by retina and signals directly to the SCN. The central clock entrains the peripheral clocks through neuronal and hormonal signals, body temperature and feeding-related cues, aligning all clocks with the external light/dark cycle. Circadian rhythms allow an organism to achieve temporal homeostasis with its environment at the molecular level by regulating gene expression to create a peak of protein expression once every 24 hours to control when a particular physiological process is most active with respect to the solar day. Transcription and translation of core clock components (CLOCK, NPAS2, BMAL1, BMAL2, PER1, PER2, PER3, CRY1 and CRY2) plays a critical role in rhythm generation, whereas delays imposed by post-translational modifications (PTMs) are important for determining the period (tau) of the rhythms (tau refers to the period of a rhythm and is the length, in time, of one complete cycle). A diurnal rhythm is synchronized with the day/night cycle, while the ultradian and infradian rhythms have a period shorter and longer than 24 hours, respectively. Disruptions in the circadian rhythms contribute to the pathology of cardiovascular diseases, cancer, metabolic syndromes and aging. A transcription/translation feedback loop (TTFL) forms the core of the molecular circadian clock mechanism. Transcription factors, CLOCK or NPAS2 and BMAL1 or BMAL2, form the positive limb of the feedback loop, act in the form of a heterodimer and activate the transcription of core clock genes and clock-controlled genes (involved in key metabolic processes), harboring E-box elements (5'-CACGTG-3') within their promoters. The core clock genes: PER1/2/3 and CRY1/2 which are transcriptional repressors form the negative limb of the feedback loop and interact with the CLOCK|NPAS2-BMAL1|BMAL2 heterodimer inhibiting its activity and thereby negatively regulating their own expression. This heterodimer also activates nuclear receptors NR1D1/2 and RORA/B/G, which form a second feedback loop and which activate and repress BMAL1 transcription, respectively. BMAL1 positively regulates myogenesis and negatively regulates adipogenesis via the transcriptional control of the genes of the canonical Wnt signaling pathway. Plays a role in normal pancreatic beta-cell function; regulates glucose-stimulated insulin secretion via the regulation of antioxidant genes NFE2L2/NRF2 and its targets SESN2, PRDX3, CCLC and CCLM. Negatively regulates the mTORC1 signaling pathway; regulates the expression of MTOR and DEPTOR. Controls diurnal oscillations of Ly6C inflammatory monocytes; rhythmic recruitment of the PRC2 complex imparts diurnal variation to chemokine expression that is necessary to sustain Ly6C monocyte rhythms. Regulates the expression of HSD3B2, STAR, PTGS2, CYP11A1, CYP19A1 and LHCGR in the ovary and also the genes involved in hair growth. Plays an important role in adult hippocampal neurogenesis by regulating the timely entry of neural stem/progenitor cells (NSPCs) into the cell cycle and the number of cell divisions that take place prior to cell-cycle exit. Regulates the circadian expression of CIART and KLF11. The CLOCK-BMAL1 heterodimer regulates the circadian expression of SERPINE1/PAI1, VWF, B3, CCRN4L/NOC, NAMPT, DBP, MYOD1, PPARGC1A, PPARGC1B, SIRT1, GYS2, F7, NGFR, GNRHR, BHLHE40/DEC1, ATF4, MTA1, KLF10 and also genes implicated in glucose and lipid metabolism. Promotes rhythmic chromatin opening, regulating the DNA accessibility of other transcription factors. The NPAS2-BMAL1 heterodimer positively regulates the expression of MAOA, F7 and LDHA and modulates the circadian rhythm of daytime contrast sensitivity by regulating the rhythmic expression of adenylate cyclase type 1 (ADCY1) in the retina. The preferred binding motif for the CLOCK-BMAL1 heterodimer is 5'-CACGTGA-3', which contains a flanking adenine nucleotide at the 3-prime end of the canonical 6-nucleotide E-box sequence. CLOCK specifically binds to the half-site 5'-CAC-3', while BMAL1 binds to the half-site 5'-GTGA-3'. The CLOCK-BMAL1 heterodimer also recognizes the non-canonical E-box motifs 5'-AACGTGA-3' and 5'-CATGTGA-3'. Essential for the rhythmic interaction of CLOCK with ASS1 and plays a critical role in positively regulating CLOCK-mediated acetylation of ASS1. Plays a role in protecting against lethal sepsis by limiting the expression of immune checkpoint protein CD274 in macrophages in a PKM2-dependent manner. Regulates the diurnal rhythms of skeletal muscle metabolism via transcriptional activation of genes promoting triglyceride synthesis (DGAT2) and metabolic efficiency (COQ10B). The polypeptide is Basic helix-loop-helix ARNT-like protein 1 (Bmal1) (Nannospalax galili (Northern Israeli blind subterranean mole rat)).